The chain runs to 154 residues: Myoglobin (154 aa).

The Globin domain maps to Gly2 to Lys148. At Ser4 the chain carries Phosphoserine. His65 provides a ligand contact to nitrite. His65 is an O2 binding site. At Thr68 the chain carries Phosphothreonine. Position 94 (His94) interacts with heme b.

It belongs to the globin family. In terms of assembly, monomeric.

Its subcellular location is the cytoplasm. It is found in the sarcoplasm. The enzyme catalyses Fe(III)-heme b-[protein] + nitric oxide + H2O = Fe(II)-heme b-[protein] + nitrite + 2 H(+). It catalyses the reaction H2O2 + AH2 = A + 2 H2O. Its function is as follows. Monomeric heme protein which primary function is to store oxygen and facilitate its diffusion within muscle tissues. Reversibly binds oxygen through a pentacoordinated heme iron and enables its timely and efficient release as needed during periods of heightened demand. Depending on the oxidative conditions of tissues and cells, and in addition to its ability to bind oxygen, it also has a nitrite reductase activity whereby it regulates the production of bioactive nitric oxide. Under stress conditions, like hypoxia and anoxia, it also protects cells against reactive oxygen species thanks to its pseudoperoxidase activity. The polypeptide is Myoglobin (MB) (Lagostomus maximus (Plains viscacha)).